The sequence spans 249 residues: Probable amino-acid import ATP-binding protein YxeO (249 aa).

Residues 2-239 form the ABC transporter domain; that stretch reads ITVKNIRKAF…PKNERTKRFI (238 aa). Position 34–41 (34–41) interacts with ATP; it reads GPSGSGKS.

The protein belongs to the ABC transporter superfamily. In terms of assembly, the complex is composed of two ATP-binding proteins (YxeO), two transmembrane proteins (YxeN) and a solute-binding protein (YxeM).

It localises to the cell membrane. Functionally, probably part of the ABC transporter complex YxeMNO that could be involved in amino-acid import. May transport S-methylcysteine. Responsible for energy coupling to the transport system. This is Probable amino-acid import ATP-binding protein YxeO (yxeO) from Bacillus subtilis (strain 168).